Here is a 353-residue protein sequence, read N- to C-terminus: Photosystem II D2 protein (353 aa).

Position 2 is an N-acetylthreonine (T2). Position 2 is a phosphothreonine (T2). A helical membrane pass occupies residues 41–61; sequence CAYFALGGWFTGTTFVTSWYT. H118 lines the chlorophyll a pocket. Residues 125 to 141 form a helical membrane-spanning segment; sequence GFMLRQFELARSVQLRP. Q130 and N143 together coordinate pheophytin a. The helical transmembrane segment at 153-166 threads the bilayer; that stretch reads VFVSVFLIYPLGQS. H198 lines the chlorophyll a pocket. Residues 208 to 228 traverse the membrane as a helical segment; the sequence is AALLCAIHGATVENTLFEDGD. A plastoquinone contacts are provided by H215 and F262. H215 is a Fe cation binding site. H269 serves as a coordination point for Fe cation. The chain crosses the membrane as a helical span at residues 279–295; it reads GLWMSALGVVGLALNLR.

The protein belongs to the reaction center PufL/M/PsbA/D family. In terms of assembly, PSII is composed of 1 copy each of membrane proteins PsbA, PsbB, PsbC, PsbD, PsbE, PsbF, PsbH, PsbI, PsbJ, PsbK, PsbL, PsbM, PsbT, PsbX, PsbY, PsbZ, Psb30/Ycf12, at least 3 peripheral proteins of the oxygen-evolving complex and a large number of cofactors. It forms dimeric complexes. The D1/D2 heterodimer binds P680, chlorophylls that are the primary electron donor of PSII, and subsequent electron acceptors. It shares a non-heme iron and each subunit binds pheophytin, quinone, additional chlorophylls, carotenoids and lipids. There is also a Cl(-1) ion associated with D1 and D2, which is required for oxygen evolution. The PSII complex binds additional chlorophylls, carotenoids and specific lipids. is required as a cofactor.

It is found in the plastid. The protein localises to the chloroplast thylakoid membrane. The enzyme catalyses 2 a plastoquinone + 4 hnu + 2 H2O = 2 a plastoquinol + O2. In terms of biological role, photosystem II (PSII) is a light-driven water:plastoquinone oxidoreductase that uses light energy to abstract electrons from H(2)O, generating O(2) and a proton gradient subsequently used for ATP formation. It consists of a core antenna complex that captures photons, and an electron transfer chain that converts photonic excitation into a charge separation. The D1/D2 (PsbA/PsbD) reaction center heterodimer binds P680, the primary electron donor of PSII as well as several subsequent electron acceptors. D2 is needed for assembly of a stable PSII complex. The chain is Photosystem II D2 protein from Populus deltoides (Eastern poplar).